A 227-amino-acid polypeptide reads, in one-letter code: ATP synthase F(0) complex subunit a (227 aa).

The next 6 membrane-spanning stretches (helical) occupy residues 9–29 (FASPSYLGIPLIAIAIALPWV), 69–89 (WALLLASLMIFLITINMLGLL), 98–118 (QLSLNMGFAVPLWLATVIIGM), 132–152 (EGTPIPLIPVLIIIETISLFI), 165–185 (LTAGHLLIQLIATAVFVLMPM), and 190–210 (AILTATVLFLLTLLEVAVAMI).

Belongs to the ATPase A chain family. Component of the ATP synthase complex composed at least of ATP5F1A/subunit alpha, ATP5F1B/subunit beta, ATP5MC1/subunit c (homooctomer), MT-ATP6/subunit a, MT-ATP8/subunit 8, ATP5ME/subunit e, ATP5MF/subunit f, ATP5MG/subunit g, ATP5MK/subunit k, ATP5MJ/subunit j, ATP5F1C/subunit gamma, ATP5F1D/subunit delta, ATP5F1E/subunit epsilon, ATP5PF/subunit F6, ATP5PB/subunit b, ATP5PD/subunit d, ATP5PO/subunit OSCP. ATP synthase complex consists of a soluble F(1) head domain (subunits alpha(3) and beta(3)) - the catalytic core - and a membrane F(0) domain - the membrane proton channel (subunits c, a, 8, e, f, g, k and j). These two domains are linked by a central stalk (subunits gamma, delta, and epsilon) rotating inside the F1 region and a stationary peripheral stalk (subunits F6, b, d, and OSCP). Interacts with DNAJC30; interaction is direct.

Its subcellular location is the mitochondrion inner membrane. The catalysed reaction is H(+)(in) = H(+)(out). In terms of biological role, subunit a, of the mitochondrial membrane ATP synthase complex (F(1)F(0) ATP synthase or Complex V) that produces ATP from ADP in the presence of a proton gradient across the membrane which is generated by electron transport complexes of the respiratory chain. ATP synthase complex consist of a soluble F(1) head domain - the catalytic core - and a membrane F(1) domain - the membrane proton channel. These two domains are linked by a central stalk rotating inside the F(1) region and a stationary peripheral stalk. During catalysis, ATP synthesis in the catalytic domain of F(1) is coupled via a rotary mechanism of the central stalk subunits to proton translocation. With the subunit c (ATP5MC1), forms the proton-conducting channel in the F(0) domain, that contains two crucial half-channels (inlet and outlet) that facilitate proton movement from the mitochondrial intermembrane space (IMS) into the matrix. Protons are taken up via the inlet half-channel and released through the outlet half-channel, following a Grotthuss mechanism. The protein is ATP synthase F(0) complex subunit a of Carassius auratus (Goldfish).